Consider the following 551-residue polypeptide: Vacuolar protein sorting-associated protein 17 (551 aa).

Residues 1 to 100 form a disordered region; sequence MTSAVPYDPY…SERVILPERS (100 aa). 2 stretches are compositionally biased toward polar residues: residues 29–39 and 46–64; these read AATTTDGSSSM and TEQTAASVQDNGTANNIQN. Residues 108-227 form the PX domain; sequence LLAKVTGLER…FFIESDFNTY (120 aa). A coiled-coil region spans residues 359–385; that stretch reads IMRNLVQAQQNSKAKQEQARRFRSRRD. The disordered stretch occupies residues 474–504; it reads RLGRHAVSNNNSDTSQTLKGDSWTGESNRKS. A compositionally biased stretch (polar residues) spans 480-504; it reads VSNNNSDTSQTLKGDSWTGESNRKS. Residue Ser-544 is modified to Phosphoserine.

This sequence belongs to the VPS17 family. As to quaternary structure, component of the retromer complex which consists of VPS29, VPS26, VPS35, VPS5 and VPS17. Component of a retromer subcomplex consisting of VPS5 and VPS17. Phosphorylated on one or more serine residues.

The protein resides in the endomembrane system. Component of the membrane-associated retromer complex which is essential in endosome-to-Golgi retrograde transport. The VPS5-VPS17 subcomplex may assemble onto the membrane to promote vesicle formation and is required for recycling the vacuolar protein-sorting receptor. Required for the sorting and delivery of a subset of soluble vacuolar hydrolases. Required for retention of late Golgi membrane proteins and vacuolar biogenesis. Involved in vacuolar fragmentation during hyperosmotic stress. The chain is Vacuolar protein sorting-associated protein 17 from Saccharomyces cerevisiae (strain ATCC 204508 / S288c) (Baker's yeast).